A 161-amino-acid polypeptide reads, in one-letter code: Vasotocin-neurophysin VT (161 aa).

An N-terminal signal peptide occupies residues 1–22 (MSAMGWTLLAAALLAISAQSNG). C23 and C28 are disulfide-bonded. G31 carries the post-translational modification Glycine amide. Disulfide bonds link C43–C91, C46–C58, C52–C81, C59–C71, C99–C111, C105–C123, and C112–C117.

The protein belongs to the vasopressin/oxytocin family.

The protein resides in the secreted. Its function is as follows. Vasotocin is an antidiuretic hormone. This chain is Vasotocin-neurophysin VT, found in Eptatretus stoutii (Pacific hagfish).